The primary structure comprises 236 residues: tRNA (guanine-N(1)-)-methyltransferase (236 aa).

S-adenosyl-L-methionine-binding positions include Gly110 and 129 to 134; that span reads LGDFVL.

The protein belongs to the RNA methyltransferase TrmD family. Homodimer.

The protein localises to the cytoplasm. The catalysed reaction is guanosine(37) in tRNA + S-adenosyl-L-methionine = N(1)-methylguanosine(37) in tRNA + S-adenosyl-L-homocysteine + H(+). Its function is as follows. Specifically methylates guanosine-37 in various tRNAs. The sequence is that of tRNA (guanine-N(1)-)-methyltransferase from Clostridium perfringens (strain ATCC 13124 / DSM 756 / JCM 1290 / NCIMB 6125 / NCTC 8237 / Type A).